Here is a 53-residue protein sequence, read N- to C-terminus: UPF0391 membrane protein Meso_3392 (53 aa).

2 helical membrane-spanning segments follow: residues 4–24 (WILI…HSLA) and 33–53 (ILIA…IAIA).

It belongs to the UPF0391 family.

The protein resides in the cell membrane. This is UPF0391 membrane protein Meso_3392 from Chelativorans sp. (strain BNC1).